A 350-amino-acid chain; its full sequence is Protein-glutamate methylesterase/protein-glutamine glutaminase (350 aa).

Residues 5 to 122 (RVLSVDDSAL…REGMLAYSEM (118 aa)) form the Response regulatory domain. A 4-aspartylphosphate modification is found at aspartate 56. Positions 152 to 338 (LLSSEKLLVI…DLSQVVSQQM (187 aa)) constitute a CheB-type methylesterase domain. Catalysis depends on residues serine 164, histidine 190, and aspartate 286.

The protein belongs to the CheB family. Phosphorylated by CheA. Phosphorylation of the N-terminal regulatory domain activates the methylesterase activity.

The protein localises to the cytoplasm. It catalyses the reaction [protein]-L-glutamate 5-O-methyl ester + H2O = L-glutamyl-[protein] + methanol + H(+). It carries out the reaction L-glutaminyl-[protein] + H2O = L-glutamyl-[protein] + NH4(+). Functionally, involved in chemotaxis. Part of a chemotaxis signal transduction system that modulates chemotaxis in response to various stimuli. Catalyzes the demethylation of specific methylglutamate residues introduced into the chemoreceptors (methyl-accepting chemotaxis proteins or MCP) by CheR. Also mediates the irreversible deamidation of specific glutamine residues to glutamic acid. The polypeptide is Protein-glutamate methylesterase/protein-glutamine glutaminase (Enterobacter cloacae).